The chain runs to 552 residues: Methyl-coenzyme M reductase II subunit alpha (552 aa).

Glutamine 150 is a coenzyme F430 binding site. Coenzyme B-binding positions include arginine 228, 259 to 260 (KH), and arginine 273. Coenzyme M contacts are provided by tyrosine 335 and tyrosine 446.

It belongs to the methyl-coenzyme M reductase alpha subunit family. As to quaternary structure, MCR is a hexamer of two alpha, two beta, and two gamma chains, forming a dimer of heterotrimers. Coenzyme F430 serves as cofactor.

It carries out the reaction coenzyme B + methyl-coenzyme M = methane + coenzyme M-coenzyme B heterodisulfide. It functions in the pathway one-carbon metabolism; methyl-coenzyme M reduction; methane from methyl-coenzyme M: step 1/1. In terms of biological role, component of the methyl-coenzyme M reductase (MCR) I that catalyzes the reductive cleavage of methyl-coenzyme M (CoM-S-CH3 or 2-(methylthio)ethanesulfonate) using coenzyme B (CoB or 7-mercaptoheptanoylthreonine phosphate) as reductant which results in the production of methane and the mixed heterodisulfide of CoB and CoM (CoM-S-S-CoB). This is the final step in methanogenesis. The polypeptide is Methyl-coenzyme M reductase II subunit alpha (mrtA) (Methanocaldococcus jannaschii (strain ATCC 43067 / DSM 2661 / JAL-1 / JCM 10045 / NBRC 100440) (Methanococcus jannaschii)).